The following is a 386-amino-acid chain: Phosphoglycerate kinase (386 aa).

Substrate contacts are provided by residues 21–23 (DLN), Arg36, 59–62 (HLGR), Arg112, and Arg145. Residues Lys196, Glu313, and 339-342 (GGDT) each bind ATP.

The protein belongs to the phosphoglycerate kinase family. As to quaternary structure, monomer.

The protein resides in the cytoplasm. It catalyses the reaction (2R)-3-phosphoglycerate + ATP = (2R)-3-phospho-glyceroyl phosphate + ADP. It participates in carbohydrate degradation; glycolysis; pyruvate from D-glyceraldehyde 3-phosphate: step 2/5. The polypeptide is Phosphoglycerate kinase (Haemophilus influenzae (strain PittGG)).